The chain runs to 172 residues: Photosystem I assembly protein Ycf3 (172 aa).

3 TPR repeats span residues 35–68, 72–105, and 120–153; these read AFSY…EVDA, SYIL…NPSL, and GEQA…APTN.

It belongs to the Ycf3 family.

Its subcellular location is the plastid. It is found in the chloroplast thylakoid membrane. Functionally, essential for the assembly of the photosystem I (PSI) complex. May act as a chaperone-like factor to guide the assembly of the PSI subunits. In Chlamydomonas reinhardtii (Chlamydomonas smithii), this protein is Photosystem I assembly protein Ycf3.